Consider the following 1482-residue polypeptide: Cystic fibrosis transmembrane conductance regulator (1482 aa).

The Cytoplasmic portion of the chain corresponds to M1–F77. A helical transmembrane segment spans residues F78–Q98. Residues F81–L365 form the ABC transmembrane type-1 1 domain. Over P99 to Y122 the chain is Extracellular. A helical membrane pass occupies residues L123–H146. Residues H147–L195 are Cytoplasmic-facing. A helical transmembrane segment spans residues A196–W216. Topologically, residues D217–S222 are extracellular. A helical membrane pass occupies residues A223 to M243. Residues M244–K298 lie on the Cytoplasmic side of the membrane. The chain crosses the membrane as a helical span at residues A299–F319. Topologically, residues L320–T339 are extracellular. A helical membrane pass occupies residues I340–V358. The Cytoplasmic portion of the chain corresponds to Q359 to S858. ATP-binding positions include W401, S434, G458 to T465, and Q493. One can recognise an ABC transporter 1 domain in the interval N423 to G646. C524 is lipidated: S-palmitoyl cysteine. 2 positions are modified to phosphoserine: S549 and S660. The tract at residues S654–E831 is disordered R region. Position 670 is a phosphoserine; by PKA (S670). S685 bears the Phosphoserine mark. A Glycyl lysine isopeptide (Lys-Gly) (interchain with G-Cter in ubiquitin) cross-link involves residue K687. A phosphoserine mark is found at S699 and S711. Position 716 is a phosphothreonine (T716). A phosphoserine mark is found at S736, S767, S790, S795, and S813. A helical transmembrane segment spans residues L859–V879. The 298-residue stretch at L859–S1156 folds into the ABC transmembrane type-1 2 domain. Residues V880–I919 are Extracellular-facing. N-linked (GlcNAc...) asparagine glycosylation is found at N894, N895, N901, and N910. Residues Y920–H940 form a discontinuously helical membrane-spanning segment. The Cytoplasmic portion of the chain corresponds to T941–T991. Residues M992–L1012 form a helical membrane-spanning segment. Over Q1013–P1014 the chain is Extracellular. The helical transmembrane segment at Y1015–L1035 threads the bilayer. Over H1036–T1096 the chain is Cytoplasmic. The helical transmembrane segment at L1097 to F1117 threads the bilayer. The Extracellular portion of the chain corresponds to V1118–G1131. The helical transmembrane segment at I1132–I1152 threads the bilayer. The Cytoplasmic segment spans residues D1153–L1482. Positions M1212–P1445 constitute an ABC transporter 2 domain. ATP is bound by residues Y1221 and G1246–S1253. Residues R1388–L1482 are interaction with GORASP2. A lipid anchor (S-palmitoyl cysteine) is attached at C1397. The span at H1454–R1463 shows a compositional bias: basic residues. Residues H1454 to L1482 are disordered. The residue at position 1458 (S1458) is a Phosphoserine. Acidic residues predominate over residues E1472–L1482. The short motif at T1480 to L1482 is the PDZ-binding element.

This sequence belongs to the ABC transporter superfamily. ABCC family. CFTR transporter (TC 3.A.1.202) subfamily. Monomer; does not require oligomerization for channel activity. May form oligomers in the membrane. Interacts with SLC26A3, SLC26A6 and NHERF1. Interacts with SHANK2. Interacts with MYO6. Interacts (via C-terminus) with GOPC (via PDZ domain); this promotes CFTR internalization and thereby decreases channel activity. Interacts with SLC4A7 through NHERF1. Found in a complex with MYO5B and RAB11A. Interacts with ANO1. Interacts with SLC26A8. Interacts with AHCYL1; the interaction increases CFTR activity. Interacts with CSE1L. The core-glycosylated form interacts with GORASP2 (via PDZ GRASP-type 1 domain) in respone to ER stress. Interacts with MARCHF2; the interaction leads to CFTR ubiqtuitination and degradation. Interacts with ADGRG2. In terms of processing, N-glycosylated. Phosphorylated; cAMP treatment promotes phosphorylation and activates the channel. Dephosphorylation decreases the ATPase activity (in vitro). Phosphorylation at PKA sites activates the channel. Phosphorylation at PKC sites enhances the response to phosphorylation by PKA. Phosphorylated by AMPK; this inhibits channel activity. Post-translationally, ubiquitinated, leading to its degradation in the lysosome. Deubiquitination by USP10 in early endosomes enhances its endocytic recycling to the cell membrane. Ubiquitinated by RNF185 during ER stress. Ubiquitinated by MARCHF2.

Its subcellular location is the apical cell membrane. It is found in the early endosome membrane. The protein localises to the cell membrane. It localises to the recycling endosome membrane. The protein resides in the endoplasmic reticulum membrane. Its subcellular location is the nucleus. The catalysed reaction is ATP + H2O + closed Cl(-) channel = ADP + phosphate + open Cl(-) channel.. It catalyses the reaction chloride(in) = chloride(out). It carries out the reaction hydrogencarbonate(in) = hydrogencarbonate(out). The enzyme catalyses ATP + H2O = ADP + phosphate + H(+). In terms of biological role, epithelial ion channel that plays an important role in the regulation of epithelial ion and water transport and fluid homeostasis. Mediates the transport of chloride ions across the cell membrane. Possesses an intrinsic ATPase activity and utilizes ATP to gate its channel; the passive flow of anions through the channel is gated by cycles of ATP binding and hydrolysis by the ATP-binding domains. The ion channel is also permeable to HCO(3)(-); selectivity depends on the extracellular chloride concentration. Exerts its function also by modulating the activity of other ion channels and transporters. Contributes to the regulation of the pH and the ion content of the epithelial fluid layer. Modulates the activity of the epithelial sodium channel (ENaC) complex, in part by regulating the cell surface expression of the ENaC complex. May regulate bicarbonate secretion and salvage in epithelial cells by regulating the transporter SLC4A7. Can inhibit the chloride channel activity of ANO1. Plays a role in the chloride and bicarbonate homeostasis during sperm epididymal maturation and capacitation. The protein is Cystic fibrosis transmembrane conductance regulator of Loxodonta africana (African elephant).